Here is an 82-residue protein sequence, read N- to C-terminus: Small ribosomal subunit protein uS17 (82 aa).

It belongs to the universal ribosomal protein uS17 family. As to quaternary structure, part of the 30S ribosomal subunit.

One of the primary rRNA binding proteins, it binds specifically to the 5'-end of 16S ribosomal RNA. The polypeptide is Small ribosomal subunit protein uS17 (Tolumonas auensis (strain DSM 9187 / NBRC 110442 / TA 4)).